The primary structure comprises 314 residues: 2,3-dihydroxyphenylpropionate/2,3-dihydroxicinnamic acid 1,2-dioxygenase 2 (314 aa).

Catalysis depends on His115, which acts as the Proton donor. The active-site Proton acceptor is the His179.

Belongs to the LigB/MhpB extradiol dioxygenase family. In terms of assembly, homotetramer. Fe(2+) serves as cofactor.

It catalyses the reaction 3-(2,3-dihydroxyphenyl)propanoate + O2 = (2Z,4E)-2-hydroxy-6-oxonona-2,4-dienedioate + H(+). The enzyme catalyses (2E)-3-(2,3-dihydroxyphenyl)prop-2-enoate + O2 = (2Z,4E,7E)-2-hydroxy-6-oxonona-2,4,7-trienedioate + H(+). Its pathway is aromatic compound metabolism; 3-phenylpropanoate degradation. Functionally, catalyzes the non-heme iron(II)-dependent oxidative cleavage of 2,3-dihydroxyphenylpropionic acid and 2,3-dihydroxicinnamic acid into 2-hydroxy-6-ketononadienedioate and 2-hydroxy-6-ketononatrienedioate, respectively. This Pseudomonas putida (Arthrobacter siderocapsulatus) protein is 2,3-dihydroxyphenylpropionate/2,3-dihydroxicinnamic acid 1,2-dioxygenase 2 (mhpB2).